A 93-amino-acid polypeptide reads, in one-letter code: Large ribosomal subunit protein bL31 (93 aa).

The interval 68–93 (GSADAAADEKKTDAKNNNKDNTSKED) is disordered. The span at 74–93 (ADEKKTDAKNNNKDNTSKED) shows a compositional bias: basic and acidic residues.

Belongs to the bacterial ribosomal protein bL31 family. Type A subfamily. As to quaternary structure, part of the 50S ribosomal subunit.

In terms of biological role, binds the 23S rRNA. This is Large ribosomal subunit protein bL31 from Prochlorococcus marinus (strain MIT 9303).